The primary structure comprises 507 residues: MSIFAYSILAGLAPLLSSSIPFFTLRNRNINASVFHILLCISAGLLFAVASLELIPESMNLALRSFEESTKTQTSLKSTTTKTTTTTTTIGNIKLQKSFISNSEDSLNEFHSLDNEINKPPIEGLNLNNLNQATNLDNNEEDNDNLDNDGENEIENDHDHDHQEDEGGDNDHDHESEEKKEFLKIPMYGIGFGFAILIIVESIFSSIDGGGGGGGHHSHSHGSLSSSSSNDVISDYISNNNSNNINNNDDDNNNNNNNNDDDDDSVELLERNVVNKDNSNNINNINNNNDDEDIIVINKSIENTPNIASPVMNKDNNNNDKDKNRNSNKSDIKNSGSINNGNNSGNNNNNNKSKLTITTFIALSIHSFVDGVVISSAFSSSPHVGARVALAIVIHKIPDGLVLSSLILSQKKFNSGIFSNPFFYFLLISCMTPLGSFISSFLFGGLSLSSGAFVLGFGAGTFIYITSTAILPEILSNQIVKKSTSLFSIFLGYLLFIFLDSQFHGAH.

Residues 1-18 (MSIFAYSILAGLAPLLSS) form the signal peptide. Residue asparagine 31 is glycosylated (N-linked (GlcNAc...) asparagine). Residues 35-55 (FHILLCISAGLLFAVASLELI) form a helical membrane-spanning segment. The segment at 124–179 (GLNLNNLNQATNLDNNEEDNDNLDNDGENEIENDHDHDHQEDEGGDNDHDHESEEK) is disordered. Over residues 125 to 137 (LNLNNLNQATNLD) the composition is skewed to low complexity. Acidic residues predominate over residues 138–154 (NNEEDNDNLDNDGENEI). The segment covering 155–179 (ENDHDHDHQEDEGGDNDHDHESEEK) has biased composition (basic and acidic residues). A helical transmembrane segment spans residues 185-205 (IPMYGIGFGFAILIIVESIFS). The segment at 209 to 264 (GGGGGGGHHSHSHGSLSSSSSNDVISDYISNNNSNNINNNDDDNNNNNNNNDDDDD) is disordered. Residues 221 to 258 (HGSLSSSSSNDVISDYISNNNSNNINNNDDDNNNNNNN) show a composition bias toward low complexity. Residues asparagine 240, asparagine 298, asparagine 328, asparagine 342, and asparagine 351 are each glycosylated (N-linked (GlcNAc...) asparagine). Residues 305 to 350 (PNIASPVMNKDNNNNDKDKNRNSNKSDIKNSGSINNGNNSGNNNNN) form a disordered region. A compositionally biased stretch (basic and acidic residues) spans 317–332 (NNNDKDKNRNSNKSDI). Residues 333–350 (KNSGSINNGNNSGNNNNN) are compositionally biased toward low complexity. Helical transmembrane passes span 355-375 (LTIT…VVIS), 388-408 (VALA…SLIL), 422-442 (FFYF…SSFL), 451-471 (GAFV…TAIL), and 486-506 (LFSI…FHGA).

This sequence belongs to the ZIP transporter (TC 2.A.5) family.

The protein resides in the membrane. May transport divalent cations. May participate, with dstA, in the regulation of the differentiation of stalk cells during development. The chain is Protein zntA (zntA) from Dictyostelium discoideum (Social amoeba).